Reading from the N-terminus, the 457-residue chain is Argininosuccinate lyase (457 aa).

Belongs to the lyase 1 family. Argininosuccinate lyase subfamily.

Its subcellular location is the cytoplasm. It carries out the reaction 2-(N(omega)-L-arginino)succinate = fumarate + L-arginine. Its pathway is amino-acid biosynthesis; L-arginine biosynthesis; L-arginine from L-ornithine and carbamoyl phosphate: step 3/3. The protein is Argininosuccinate lyase of Pectobacterium atrosepticum (strain SCRI 1043 / ATCC BAA-672) (Erwinia carotovora subsp. atroseptica).